We begin with the raw amino-acid sequence, 248 residues long: Probable transcriptional regulatory protein BH14810 (248 aa).

Belongs to the TACO1 family.

The protein resides in the cytoplasm. The polypeptide is Probable transcriptional regulatory protein BH14810 (Bartonella henselae (strain ATCC 49882 / DSM 28221 / CCUG 30454 / Houston 1) (Rochalimaea henselae)).